Reading from the N-terminus, the 195-residue chain is L-rhamnose-binding lectin CSL2 (195 aa).

SUEL-type lectin domains lie at 1–97 and 104–195; these read TRVV…YTCL and TCEG…YTCG.

Functionally, L-rhamnose binding lectin. Has hemagglutinating activity towards rabbit erythrocytes and human type B erythrocytes. Hemagglutinating activity is inhibited by smooth-type lipopolysaccharide (LPS) from S.flexneri 1A and E.coli K12, but not by rough-type LPS from S.flexneri, E.coli K12 and E.coli EH100. Agglutinates E.coli K12 and B.subtilis. This Oncorhynchus keta (Chum salmon) protein is L-rhamnose-binding lectin CSL2.